Reading from the N-terminus, the 498-residue chain is Glycerol kinase (498 aa).

An ADP-binding site is contributed by Thr-11. Residues Thr-11, Ser-12, and Ser-13 each contribute to the ATP site. Thr-11 is a sn-glycerol 3-phosphate binding site. Residue Arg-15 participates in ADP binding. Sn-glycerol 3-phosphate-binding residues include Arg-81, Glu-82, Tyr-133, and Asp-242. Residues Arg-81, Glu-82, Tyr-133, Asp-242, and Gln-243 each contribute to the glycerol site. The ADP site is built by Thr-264 and Gly-307. ATP is bound by residues Thr-264, Gly-307, Gln-311, and Gly-412. The ADP site is built by Gly-412 and Asn-416.

It belongs to the FGGY kinase family.

It carries out the reaction glycerol + ATP = sn-glycerol 3-phosphate + ADP + H(+). Its pathway is polyol metabolism; glycerol degradation via glycerol kinase pathway; sn-glycerol 3-phosphate from glycerol: step 1/1. With respect to regulation, inhibited by fructose 1,6-bisphosphate (FBP). Its function is as follows. Key enzyme in the regulation of glycerol uptake and metabolism. Catalyzes the phosphorylation of glycerol to yield sn-glycerol 3-phosphate. This is Glycerol kinase from Delftia acidovorans (strain DSM 14801 / SPH-1).